The chain runs to 181 residues: MYRLLALVALASMADCSALLTHITGTSIPGQLFINRQFLAVNPDGAVYGTIESDNVDTIFKRVAVDRNRIVIQNAITCVYLCMDRCGQLYGSKTLSKDCFMREFLEKNNYNTYYKVYDRKLTYVALKNDGTPRKLQISKSRKLGKLSVYAMALLKRLSFPIYTSCPNIKSEIIVRHRKCHV.

The N-terminal stretch at 1–16 (MYRLLALVALASMADC) is a signal peptide.

The protein belongs to the heparin-binding growth factors family.

This is Fibroblast growth factor homolog (FGF) from Lepidoptera (butterflies and moths).